The sequence spans 450 residues: Ribosomal protein uS12 methylthiotransferase RimO (450 aa).

The region spanning 7–123 (QKVSMVSLGC…IAEILAEKSG (117 aa)) is the MTTase N-terminal domain. [4Fe-4S] cluster-binding residues include Cys16, Cys52, Cys86, Cys161, Cys165, and Cys168. The 231-residue stretch at 147–377 (SSPAWFSYLK…MRIQARLSFK (231 aa)) folds into the Radical SAM core domain. Positions 380–448 (RELIGTTEQV…DYDLIGEIQE (69 aa)) constitute a TRAM domain.

Belongs to the methylthiotransferase family. RimO subfamily. [4Fe-4S] cluster serves as cofactor.

The protein resides in the cytoplasm. It carries out the reaction L-aspartate(89)-[ribosomal protein uS12]-hydrogen + (sulfur carrier)-SH + AH2 + 2 S-adenosyl-L-methionine = 3-methylsulfanyl-L-aspartate(89)-[ribosomal protein uS12]-hydrogen + (sulfur carrier)-H + 5'-deoxyadenosine + L-methionine + A + S-adenosyl-L-homocysteine + 2 H(+). Its function is as follows. Catalyzes the methylthiolation of an aspartic acid residue of ribosomal protein uS12. This is Ribosomal protein uS12 methylthiotransferase RimO from Pelobacter propionicus (strain DSM 2379 / NBRC 103807 / OttBd1).